The chain runs to 1052 residues: Swarming motility protein SwrC (1052 aa).

The protein belongs to the resistance-nodulation-cell division (RND) (TC 2.A.6) family.

Its function is as follows. Required for self-resistance to surfactin, an antimicrobial lipopeptide surfactant produced by B.subtilis. Also required for swarming motility. The polypeptide is Swarming motility protein SwrC (swrC) (Bacillus subtilis (strain 168)).